Consider the following 817-residue polypeptide: Nuclear hormone receptor family member nhr-48 (817 aa).

The disordered stretch occupies residues 49–91 (YNDDKDDPFYEDEGSGGGTSGGGKKSSRKRANTTSSSGGNEKE). The span at 52–62 (DKDDPFYEDEG) shows a compositional bias: acidic residues. Over residues 63–72 (SGGGTSGGGK) the composition is skewed to gly residues. Residues 97-172 (NKVCRVCGDK…VGMKKEWIMS (76 aa)) constitute a DNA-binding region (nuclear receptor). 2 NR C4-type zinc fingers span residues 100–120 (CRVC…CESC) and 136–155 (CPFN…CQRC). Positions 202–212 (ACMEDESENSY) are enriched in acidic residues. 2 disordered regions span residues 202–221 (ACME…PSHQ) and 258–284 (MNFY…SSQL). Over residues 273–284 (LPSNSCASSSQL) the composition is skewed to polar residues.

It belongs to the nuclear hormone receptor family.

The protein localises to the nucleus. Functionally, orphan nuclear receptor. In Caenorhabditis elegans, this protein is Nuclear hormone receptor family member nhr-48 (nhr-48).